The following is a 179-amino-acid chain: Large ribosomal subunit protein uL5 (179 aa).

Belongs to the universal ribosomal protein uL5 family. In terms of assembly, part of the 50S ribosomal subunit; part of the 5S rRNA/L5/L18/L25 subcomplex. Contacts the 5S rRNA and the P site tRNA. Forms a bridge to the 30S subunit in the 70S ribosome.

This is one of the proteins that bind and probably mediate the attachment of the 5S RNA into the large ribosomal subunit, where it forms part of the central protuberance. In the 70S ribosome it contacts protein S13 of the 30S subunit (bridge B1b), connecting the 2 subunits; this bridge is implicated in subunit movement. Contacts the P site tRNA; the 5S rRNA and some of its associated proteins might help stabilize positioning of ribosome-bound tRNAs. This Anoxybacillus flavithermus (strain DSM 21510 / WK1) protein is Large ribosomal subunit protein uL5.